Reading from the N-terminus, the 150-residue chain is Transcriptional repressor NrdR (150 aa).

Residues 3–34 fold into a zinc finger; the sequence is CPFCNFEESKVVDSRATDDNTTIRRRRECLNC. Residues 49–139 enclose the ATP-cone domain; it reads VLVVKKDLTR…VYRQFKDINT (91 aa).

This sequence belongs to the NrdR family. The cofactor is Zn(2+).

Negatively regulates transcription of bacterial ribonucleotide reductase nrd genes and operons by binding to NrdR-boxes. The protein is Transcriptional repressor NrdR of Clostridium botulinum (strain Alaska E43 / Type E3).